Consider the following 600-residue polypeptide: tRNA uridine 5-carboxymethylaminomethyl modification enzyme MnmG (600 aa).

10 to 15 (GGGHAG) contributes to the FAD binding site. Residues 216–239 (ADPQPRGFTGTPGPRAAESPTWQT) form a disordered region. 267 to 281 (GPRYCPSIEDKVVKF) provides a ligand contact to NAD(+).

This sequence belongs to the MnmG family. As to quaternary structure, homodimer. Heterotetramer of two MnmE and two MnmG subunits. Requires FAD as cofactor.

The protein resides in the cytoplasm. In terms of biological role, NAD-binding protein involved in the addition of a carboxymethylaminomethyl (cmnm) group at the wobble position (U34) of certain tRNAs, forming tRNA-cmnm(5)s(2)U34. The polypeptide is tRNA uridine 5-carboxymethylaminomethyl modification enzyme MnmG (Deinococcus radiodurans (strain ATCC 13939 / DSM 20539 / JCM 16871 / CCUG 27074 / LMG 4051 / NBRC 15346 / NCIMB 9279 / VKM B-1422 / R1)).